The primary structure comprises 88 residues: Small ribosomal subunit protein uS17 (88 aa).

This sequence belongs to the universal ribosomal protein uS17 family. Part of the 30S ribosomal subunit.

In terms of biological role, one of the primary rRNA binding proteins, it binds specifically to the 5'-end of 16S ribosomal RNA. In Yersinia pseudotuberculosis serotype O:1b (strain IP 31758), this protein is Small ribosomal subunit protein uS17.